Here is a 442-residue protein sequence, read N- to C-terminus: Tubulin beta chain (442 aa).

8 residues coordinate GTP: Gln-11, Glu-69, Ser-138, Gly-142, Thr-143, Gly-144, Asn-204, and Asn-226. Glu-69 lines the Mg(2+) pocket.

The protein belongs to the tubulin family. Dimer of alpha and beta chains. A typical microtubule is a hollow water-filled tube with an outer diameter of 25 nm and an inner diameter of 15 nM. Alpha-beta heterodimers associate head-to-tail to form protofilaments running lengthwise along the microtubule wall with the beta-tubulin subunit facing the microtubule plus end conferring a structural polarity. Microtubules usually have 13 protofilaments but different protofilament numbers can be found in some organisms and specialized cells. The cofactor is Mg(2+).

The protein localises to the cytoplasm. It is found in the cytoskeleton. In terms of biological role, tubulin is the major constituent of microtubules, a cylinder consisting of laterally associated linear protofilaments composed of alpha- and beta-tubulin heterodimers. Microtubules grow by the addition of GTP-tubulin dimers to the microtubule end, where a stabilizing cap forms. Below the cap, tubulin dimers are in GDP-bound state, owing to GTPase activity of alpha-tubulin. This Trypanosoma cruzi protein is Tubulin beta chain.